Consider the following 1487-residue polypeptide: Golgin subfamily A member 3 (1487 aa).

The residue at position 1 (Met1) is an N-acetylmethionine. Residues 1–118 form a disordered region; sequence MDGASAKQDG…GTSAEGSVRK (118 aa). 2 positions are modified to phosphoserine: Ser18 and Ser60. Residues 62-74 are compositionally biased toward polar residues; that stretch reads DRSSQVAICQNGQ. The interval 121–141 is interaction with GOPC; sequence LQSLRLSLPMQETQLCSTASS. The golgi-targeting domain stretch occupies residues 172–257; that stretch reads ERSSQPATKM…DYRTEDPSDS (86 aa). Disordered regions lie at residues 221-321 and 365-394; these read PKVG…SSLS and AAQH…SMES. 3 stretches are compositionally biased toward low complexity: residues 269–288, 312–321, and 365–375; these read SSLK…SPSS, SDSSSHSSLS, and AAQHQDQNQEA. Residue Ser270 is modified to Phosphoserine. The stretch at 358 to 1454 forms a coiled coil; sequence KDVLQAAAAQ…TITVHESLSS (1097 aa). 3 positions are modified to phosphoserine: Ser381, Ser385, and Ser461. Residues 785-796 show a composition bias toward basic and acidic residues; the sequence is KEELDRGARRLE. Residues 785-804 are disordered; it reads KEELDRGARRLEEDTEETSG. Ser979 carries the post-translational modification Phosphoserine. Over residues 1372 to 1382 the composition is skewed to basic and acidic residues; it reads RGAAKKKEPKG. Disordered regions lie at residues 1372 to 1396 and 1458 to 1487; these read RGAA…IKIP and VEAA…GLGQ. A Phosphoserine modification is found at Ser1387. A compositionally biased stretch (basic and acidic residues) spans 1462-1474; it reads PAEHAHPRGDTKL. At Ser1479 the chain carries Phosphoserine.

In terms of assembly, homodimer. Interacts with GOLGA7. Interacts with GOPC. Post-translationally, cleaved by caspases in apoptotic cells. Highly expressed in testis. Transcripts can be found in spermatids during spermatogenesis. No expression in Leydig cells, spermatogonia or spermatocytes. Detected at low levels in all tissues.

It is found in the cytoplasm. The protein resides in the golgi apparatus. It localises to the golgi stack membrane. In terms of biological role, plays an important role in spermatogenesis and/or testis development. Probably identical with the serologically detectable male antigen (SDM). Probably involved in maintaining Golgi structure. The polypeptide is Golgin subfamily A member 3 (Golga3) (Mus musculus (Mouse)).